A 585-amino-acid chain; its full sequence is RNA polymerase sigma factor RpoD (585 aa).

The disordered stretch occupies residues 67–93 (PASTLVPKDDSKPARKKKESSASTSGS). Positions 351-421 (LVKANLRLVV…TRAISDQART (71 aa)) are sigma-70 factor domain-2. The short motif at 375-378 (DLIQ) is the Interaction with polymerase core subunit RpoC element. The sigma-70 factor domain-3 stretch occupies residues 430-506 (EQVNKVIRET…DTEVETPVNA (77 aa)). The tract at residues 519-572 (VLHTLPAREQKVIRMRFGLDDGYPQTLEEVGYQFKVTRERIRQIEAKALRRLRH) is sigma-70 factor domain-4. Residues 545 to 564 (LEEVGYQFKVTRERIRQIEA) constitute a DNA-binding region (H-T-H motif).

Belongs to the sigma-70 factor family. RpoD/SigA subfamily. In terms of assembly, interacts transiently with the RNA polymerase catalytic core.

The protein resides in the cytoplasm. Its function is as follows. Sigma factors are initiation factors that promote the attachment of RNA polymerase to specific initiation sites and are then released. This sigma factor is the primary sigma factor during exponential growth. The protein is RNA polymerase sigma factor RpoD of Leptospira interrogans serogroup Icterohaemorrhagiae serovar copenhageni (strain Fiocruz L1-130).